A 174-amino-acid chain; its full sequence is Co-chaperone protein HscB homolog (174 aa).

The J domain maps to 2 to 74 (NYFELFSLLP…IQRAEHLLAL (73 aa)).

Belongs to the HscB family. Interacts with HscA and stimulates its ATPase activity.

In terms of biological role, co-chaperone involved in the maturation of iron-sulfur cluster-containing proteins. Seems to help targeting proteins to be folded toward HscA. The protein is Co-chaperone protein HscB homolog of Shewanella pealeana (strain ATCC 700345 / ANG-SQ1).